The primary structure comprises 193 residues: Glycerol-3-phosphate acyltransferase (193 aa).

A run of 5 helical transmembrane segments spans residues Ala-2–Val-22, Gln-51–Ala-71, Gly-78–Phe-98, Val-112–Val-132, and Ile-154–Trp-174.

Belongs to the PlsY family. Probably interacts with PlsX.

It localises to the cell inner membrane. It carries out the reaction an acyl phosphate + sn-glycerol 3-phosphate = a 1-acyl-sn-glycero-3-phosphate + phosphate. The protein operates within lipid metabolism; phospholipid metabolism. Its function is as follows. Catalyzes the transfer of an acyl group from acyl-phosphate (acyl-PO(4)) to glycerol-3-phosphate (G3P) to form lysophosphatidic acid (LPA). This enzyme utilizes acyl-phosphate as fatty acyl donor, but not acyl-CoA or acyl-ACP. This Coxiella burnetii (strain CbuK_Q154) (Coxiella burnetii (strain Q154)) protein is Glycerol-3-phosphate acyltransferase.